The following is a 116-amino-acid chain: Large ribosomal subunit protein uL18 (116 aa).

Belongs to the universal ribosomal protein uL18 family. As to quaternary structure, part of the 50S ribosomal subunit; part of the 5S rRNA/L5/L18/L25 subcomplex. Contacts the 5S and 23S rRNAs.

In terms of biological role, this is one of the proteins that bind and probably mediate the attachment of the 5S RNA into the large ribosomal subunit, where it forms part of the central protuberance. The protein is Large ribosomal subunit protein uL18 of Pseudomonas syringae pv. tomato (strain ATCC BAA-871 / DC3000).